Reading from the N-terminus, the 154-residue chain is Ribonuclease 8 (154 aa).

Residues 1–27 form the signal peptide; it reads MAPARAGCCALLLLLLGLWVAEIPVSA. The active-site Proton acceptor is His-42. Intrachain disulfides connect Cys-64/Cys-118, Cys-82/Cys-133, and Cys-89/Cys-96. Residues 65 to 69 and Lys-90 each bind substrate; that span reads KDLNT. His-149 (proton donor) is an active-site residue.

This sequence belongs to the pancreatic ribonuclease family.

The protein resides in the secreted. Has a low ribonuclease activity. The protein is Ribonuclease 8 (RNASE8) of Pongo pygmaeus (Bornean orangutan).